Consider the following 509-residue polypeptide: Ribonuclease Y (509 aa).

Residues 5-25 traverse the membrane as a helical segment; sequence IIILLSVFCGIFFICFIICSS. The region spanning 199 to 259 is the KH domain; the sequence is TTNIVKLPSD…IRREIATRTL (61 aa). Positions 325–418 constitute an HD domain; sequence VLAHSIEVAK…VAIADSISAS (94 aa).

It belongs to the RNase Y family.

It localises to the cell membrane. Its function is as follows. Endoribonuclease that initiates mRNA decay. The chain is Ribonuclease Y from Mycoplasma mycoides subsp. mycoides SC (strain CCUG 32753 / NCTC 10114 / PG1).